The chain runs to 429 residues: GTPase Obg (429 aa).

The Obg domain maps to methionine 1–leucine 158. The disordered stretch occupies residues arginine 124–proline 145. Positions alanine 159–glutamate 329 constitute an OBG-type G domain. Residues glycine 165–serine 172, phenylalanine 190–valine 194, aspartate 212–glycine 215, asparagine 282–aspartate 285, and serine 310–valine 312 each bind GTP. The Mg(2+) site is built by serine 172 and threonine 192. The OCT domain occupies lysine 351–aspartate 429.

This sequence belongs to the TRAFAC class OBG-HflX-like GTPase superfamily. OBG GTPase family. Monomer. Mg(2+) is required as a cofactor.

It is found in the cytoplasm. Its function is as follows. An essential GTPase which binds GTP, GDP and possibly (p)ppGpp with moderate affinity, with high nucleotide exchange rates and a fairly low GTP hydrolysis rate. Plays a role in control of the cell cycle, stress response, ribosome biogenesis and in those bacteria that undergo differentiation, in morphogenesis control. The polypeptide is GTPase Obg (Listeria welshimeri serovar 6b (strain ATCC 35897 / DSM 20650 / CCUG 15529 / CIP 8149 / NCTC 11857 / SLCC 5334 / V8)).